The following is a 76-amino-acid chain: Kappa-actitoxin-Avd4n (76 aa).

The signal sequence occupies residues 1 to 19; that stretch reads MNKAFFLCLVVLCAAVVFA. Residues 20-31 constitute a propeptide that is removed on maturation; sequence AEDLQKGKHAPF. 2 disulfide bridges follow: Cys37–Cys72 and Cys39–Cys65.

The protein belongs to the sea anemone type 3 (BDS) potassium channel toxin family. Lacks the conventional Cys residue at position 55. Thus, only 2 disulfide are possible present. As to expression, experimental results show no expression in the ectodermal tissue from the distal and proximal tentacles, body wall, and oral disk. Since paralogs are expressed in this tissue, an expression of this toxin in this tissue is probable. The negative results could be explained by the very low abundance of EST sequences.

The protein localises to the secreted. Its subcellular location is the nematocyst. Blocks Kv3 voltage-gated potassium channels. Reduces blood pressure. This is Kappa-actitoxin-Avd4n from Anemonia viridis (Snakelocks anemone).